The chain runs to 222 residues: UPF0502 protein XCC4136 (222 aa).

This sequence belongs to the UPF0502 family.

The protein is UPF0502 protein XCC4136 of Xanthomonas campestris pv. campestris (strain ATCC 33913 / DSM 3586 / NCPPB 528 / LMG 568 / P 25).